Here is a 130-residue protein sequence, read N- to C-terminus: MIGNYNYGTGRRKSAVARVFIKSGSGQIVVNGKPANEYFSRETGLMVIRQPLELTNNVETFDIMVNVNGGGESGQAGAVRHGITRALIDYDATLKSELSKAGFVTRDAREVERKKVGLRKARRAKQFSKR.

This sequence belongs to the universal ribosomal protein uS9 family.

This chain is Small ribosomal subunit protein uS9, found in Janthinobacterium sp. (strain Marseille) (Minibacterium massiliensis).